A 259-amino-acid chain; its full sequence is GTP-binding protein RHO4 (259 aa).

59-66 is a binding site for GTP; the sequence is GDGATGKT. Residues 81–89 carry the Effector region motif; it reads YVPTIFENY. GTP contacts are provided by residues 107 to 111 and 165 to 168; these read DTAGQ and LKSD. Position 256 is a cysteine methyl ester (Cys256). Cys256 carries the S-geranylgeranyl cysteine lipid modification. Residues 257–259 constitute a propeptide, removed in mature form; sequence VVL.

It belongs to the small GTPase superfamily. Rho family.

Its subcellular location is the cell membrane. This Eremothecium gossypii (strain ATCC 10895 / CBS 109.51 / FGSC 9923 / NRRL Y-1056) (Yeast) protein is GTP-binding protein RHO4 (RHO4).